The primary structure comprises 272 residues: Small ribosomal subunit protein uS2 (272 aa).

The disordered stretch occupies residues 238–272 (ASKEEQTEEAEEETLSSKYREQDFQEAKSGARGEK). Basic and acidic residues predominate over residues 255 to 272 (KYREQDFQEAKSGARGEK).

This sequence belongs to the universal ribosomal protein uS2 family.

The sequence is that of Small ribosomal subunit protein uS2 from Protochlamydia amoebophila (strain UWE25).